A 1420-amino-acid polypeptide reads, in one-letter code: Transcription elongation factor spt6 (1420 aa).

Disordered stretches follow at residues 1–104 (MSAR…EEDL), 117–167 (AAAT…RPMH), and 1186–1208 (VSRP…QEAK). Composition is skewed to acidic residues over residues 11–29 (AVLD…EDYD), 45–57 (SSEE…DDEE), and 67–76 (IVDEDEEIEE). The span at 125 to 134 (KRLKRGHKDH) shows a compositional bias: basic residues. Positions 145–154 (FNSDEDEEAA) are enriched in acidic residues. The SH2 domain occupies 1230-1330 (PLFRPFNSTQ…VDEMMLHEKY (101 aa)).

Belongs to the SPT6 family.

It is found in the nucleus. The protein localises to the chromosome. Its function is as follows. Histone H3-H4 chaperone that plays a role in maintenance of chromatin structure during RNA polymerase II transcription elongation thereby repressing transcription initiation from cryptic promoters. Mediates the reassembly of nucleosomes onto the promoters of at least a selected set of genes during repression; the nucleosome reassembly is essential for transcriptional repression. Essential for viability. The sequence is that of Transcription elongation factor spt6 (spt6) from Aspergillus fumigatus (strain ATCC MYA-4609 / CBS 101355 / FGSC A1100 / Af293) (Neosartorya fumigata).